The primary structure comprises 235 residues: Large ribosomal subunit protein uL1 (235 aa).

It belongs to the universal ribosomal protein uL1 family. As to quaternary structure, part of the 50S ribosomal subunit.

Binds directly to 23S rRNA. The L1 stalk is quite mobile in the ribosome, and is involved in E site tRNA release. Functionally, protein L1 is also a translational repressor protein, it controls the translation of the L11 operon by binding to its mRNA. The polypeptide is Large ribosomal subunit protein uL1 (Thermobifida fusca (strain YX)).